A 362-amino-acid chain; its full sequence is S-adenosylmethionine decarboxylase proenzyme (362 aa).

Active-site residues include E13 and E16. The active-site Schiff-base intermediate with substrate; via pyruvic acid is S73. S73 is modified (pyruvic acid (Ser); by autocatalysis). The active-site Proton donor; for catalytic activity is C87. Catalysis depends on proton acceptor; for processing activity residues S236 and H249.

It belongs to the eukaryotic AdoMetDC family. Pyruvate serves as cofactor. Is synthesized initially as an inactive proenzyme. Formation of the active enzyme involves a self-maturation process in which the active site pyruvoyl group is generated from an internal serine residue via an autocatalytic post-translational modification. Two non-identical subunits are generated from the proenzyme in this reaction, and the pyruvate is formed at the N-terminus of the alpha chain, which is derived from the carboxyl end of the proenzyme. The post-translation cleavage follows an unusual pathway, termed non-hydrolytic serinolysis, in which the side chain hydroxyl group of the serine supplies its oxygen atom to form the C-terminus of the beta chain, while the remainder of the serine residue undergoes an oxidative deamination to produce ammonia and the pyruvoyl group blocking the N-terminus of the alpha chain.

The catalysed reaction is S-adenosyl-L-methionine + H(+) = S-adenosyl 3-(methylsulfanyl)propylamine + CO2. Its pathway is amine and polyamine biosynthesis; S-adenosylmethioninamine biosynthesis; S-adenosylmethioninamine from S-adenosyl-L-methionine: step 1/1. The polypeptide is S-adenosylmethionine decarboxylase proenzyme (SAMDC) (Datura stramonium (Jimsonweed)).